Here is a 736-residue protein sequence, read N- to C-terminus: MKKNFSRIVSIVAFSSLLGGMAFAQPAERGRNPQVRLLSAEQSMSKVQFRMDNLQFTDVQTSKGVAQVPTFTEGVNISEKGTPILPILSRSLAVSETRAMKVEVVSSKFIEKKDVLIAPSKGVISRAENPDQIPYVYGQSYNEDKFFPGEIATLSDPFILRDVRGQVVNFAPLQYNPVTKTLRIYTEIVVAVSETAEAGQNTISLVKNSTFTGFEDIYKSVFMNYEATRYTPVEEKENGRMIVIVAKKYEGDIKDFVDWKNQRGLRTEVKVAEDIASPVTANAIQQFVKQEYEKEGNDLTYVLLVGDHKDIPAKITPGIKSDQVYGQIVGNDHYNEVFIGRFSCESKEDLKTQIDRTIHYERNITTEDKWLGQALCIASAEGGPSADNGESDIQHENVIANLLTQYGYTKIIKCYDPGVTPKNIIDAFNGGISLVNYTGHGSETAWGTSHFGTTHVKQLTNSNQLPFIFDVACVNGDFLFSMPCFAEALMRAQKDGKPTGTVAIIASTINQSWASPMRGQDEMNEILCEKHPNNIKRTFGGVTMNGMFAMVEKYKKDGEKMLDTWTVFGDPSLLVRTLVPTEMQVTAPANISASAQTFEVACDYNGAIATLSDDGDMVGTAIVKDGKAIIKLNESIADETNLTLTVVGYNKVTVIKDVKVEGTSIADVANDKPYTVAVSGKTITVESPAAGLTIFDMNGRRVATAKNRMVFEAQNGVYAVRIATEGKTYTEKVIVK.

The first 24 residues, 1–24, serve as a signal peptide directing secretion; the sequence is MKKNFSRIVSIVAFSSLLGGMAFA. Positions 25-229 are excised as a propeptide; sequence QPAERGRNPQ…SVFMNYEATR (205 aa). Residues aspartate 307, valine 329, aspartate 332, tyrosine 334, glutamate 336, glutamate 390, and histidine 395 each contribute to the Ca(2+) site. Histidine 440 (proton donor) is an active-site residue. The active-site Nucleophile is cysteine 473. Residues phenylalanine 478, glutamate 487, aspartate 521, glutamate 522, glutamate 525, histidine 531, aspartate 613, and glutamate 639 each coordinate Ca(2+).

This sequence belongs to the peptidase C25 family.

The protein resides in the secreted. It catalyses the reaction Hydrolysis of proteins and small molecule substrates, with a preference for Arg in P1.. Thiol protease. Acts synergistically with RgpA to catalyze the maturation of fimbrial subunits, such as FimA. Its proteolytic activity is a major factor in both periodontal tissue destruction and in evasion of host defense mechanisms. The polypeptide is Gingipain R2 (Porphyromonas gingivalis (strain ATCC 33277 / DSM 20709 / CIP 103683 / JCM 12257 / NCTC 11834 / 2561)).